Reading from the N-terminus, the 1313-residue chain is Mitogen-activated protein kinase kinase kinase 15 (1313 aa).

The segment at 1-58 (MESGGGNAPAGALGAASESPQCPPPPGVEGAAGPAEPDGAAEGAAGGSGEGESGGGPR) is disordered. The span at 28 to 43 (VEGAAGPAEPDGAAEG) shows a compositional bias: low complexity. Residues 44-57 (AAGGSGEGESGGGP) are compositionally biased toward gly residues. Residues 652 to 908 (NGERVVLGKG…TAELLREGFL (257 aa)) form the Protein kinase domain. ATP-binding positions include 658-666 (LGKGTYGIV) and lysine 681. The Proton acceptor role is filled by aspartate 773. The tract at residues 939–958 (EPMATSSSEHGSVSPDSDAQ) is disordered. Positions 942 to 955 (ATSSSEHGSVSPDS) are enriched in polar residues. The residue at position 994 (serine 994) is a Phosphoserine. Residues 1179 to 1225 (QLGELRQETNRLLEHLVEKEREYQNLLRQTLEQKTQELYHLQLKLKS) are a coiled coil.

The protein belongs to the protein kinase superfamily. STE Ser/Thr protein kinase family. MAP kinase kinase kinase subfamily. The cofactor is Mg(2+). In terms of tissue distribution, isoform 2 and isoform 3 are widely expressed. Isoform 2 highest levels are observed in fetal brain, and isoform 3 highest levels in pancreas, peripheral blood leukocytes, fetal brain and spleen.

It carries out the reaction L-seryl-[protein] + ATP = O-phospho-L-seryl-[protein] + ADP + H(+). The catalysed reaction is L-threonyl-[protein] + ATP = O-phospho-L-threonyl-[protein] + ADP + H(+). With respect to regulation, contains an N-terminal autoinhibitory domain. Activated by phosphorylation at Thr-812, inhibited by phosphorylation at Ser-924 and Ser-994. Functionally, serine/threonine kinase which acts as a component of the MAP kinase signal transduction pathway. Once activated, acts as an upstream activator of the p38 MAPK signal transduction cascade through the phosphorylation and activation of several MAP kinase kinases. May function in a signal transduction pathway that is activated by various cell stresses and leads to apoptosis. Involved in phosphorylation of WNK4 in response to osmotic stress or hypotonic low-chloride stimulation via the p38 MAPK signal transduction cascade. This Homo sapiens (Human) protein is Mitogen-activated protein kinase kinase kinase 15 (MAP3K15).